The following is an 82-amino-acid chain: Small ribosomal subunit protein bS16 (82 aa).

Belongs to the bacterial ribosomal protein bS16 family.

The chain is Small ribosomal subunit protein bS16 from Haemophilus influenzae (strain 86-028NP).